Here is a 1488-residue protein sequence, read N- to C-terminus: Chromosome partition protein MukB (1488 aa).

34–41 (GGNGAGKS) serves as a coordination point for ATP. Coiled coils occupy residues 326-418 (LEAD…QYNQ), 444-472 (LDTF…QTAH), and 509-602 (RHLA…QRAP). Residues 666–783 (PGGAEDQRLN…SLPIFGRAAR (118 aa)) are flexible hinge. 3 coiled-coil regions span residues 835–923 (EAEI…AKLE), 977–1116 (EMLS…AKAG), and 1209–1265 (VEAI…LQSV). A disordered region spans residues 1049–1074 (ADSGAEERARQRRDELHAQLSNNRSR). Basic and acidic residues predominate over residues 1051-1065 (SGAEERARQRRDELH).

This sequence belongs to the SMC family. MukB subfamily. In terms of assembly, homodimerization via its hinge domain. Binds to DNA via its C-terminal region. Interacts, and probably forms a ternary complex, with MukE and MukF via its C-terminal region. The complex formation is stimulated by calcium or magnesium. Interacts with tubulin-related protein FtsZ.

The protein resides in the cytoplasm. Its subcellular location is the nucleoid. Functionally, plays a central role in chromosome condensation, segregation and cell cycle progression. Functions as a homodimer, which is essential for chromosome partition. Involved in negative DNA supercoiling in vivo, and by this means organize and compact chromosomes. May achieve or facilitate chromosome segregation by condensation DNA from both sides of a centrally located replisome during cell division. The chain is Chromosome partition protein MukB from Salmonella gallinarum (strain 287/91 / NCTC 13346).